Here is a 252-residue protein sequence, read N- to C-terminus: 5'-nucleotidase SurE (252 aa).

The a divalent metal cation site is built by aspartate 8, aspartate 9, serine 39, and asparagine 91.

This sequence belongs to the SurE nucleotidase family. It depends on a divalent metal cation as a cofactor.

The protein resides in the cytoplasm. The catalysed reaction is a ribonucleoside 5'-phosphate + H2O = a ribonucleoside + phosphate. Its function is as follows. Nucleotidase that shows phosphatase activity on nucleoside 5'-monophosphates. The sequence is that of 5'-nucleotidase SurE from Gemmatimonas aurantiaca (strain DSM 14586 / JCM 11422 / NBRC 100505 / T-27).